Consider the following 131-residue polypeptide: Profilin-2 (131 aa).

The protein belongs to the profilin family. Occurs in many kinds of cells as a complex with monomeric actin in a 1:1 ratio. As to expression, expressed in the intestinal wall, the spermatheca, and the pharynx.

It is found in the cytoplasm. The protein resides in the cytoskeleton. Its function is as follows. Binds to actin and affects the structure of the cytoskeleton. At high concentrations, profilin prevents the polymerization of actin, whereas it enhances it at low concentrations. By binding to PIP2, it inhibits the formation of IP3 and DG. This chain is Profilin-2 (pfn-2), found in Caenorhabditis elegans.